The primary structure comprises 231 residues: LexA repressor (231 aa).

Positions 31–51 (RAEIATEFGFRSANAAEEHLQ) form a DNA-binding region, H-T-H motif. Residues serine 148 and lysine 185 each act as for autocatalytic cleavage activity in the active site.

This sequence belongs to the peptidase S24 family. In terms of assembly, homodimer.

The catalysed reaction is Hydrolysis of Ala-|-Gly bond in repressor LexA.. Functionally, represses a number of genes involved in the response to DNA damage (SOS response), including recA and lexA. In the presence of single-stranded DNA, RecA interacts with LexA causing an autocatalytic cleavage which disrupts the DNA-binding part of LexA, leading to derepression of the SOS regulon and eventually DNA repair. This is LexA repressor from Leptothrix cholodnii (strain ATCC 51168 / LMG 8142 / SP-6) (Leptothrix discophora (strain SP-6)).